The primary structure comprises 157 residues: Crossover junction endodeoxyribonuclease RuvC (157 aa).

Catalysis depends on residues aspartate 7, glutamate 67, and aspartate 140. Residues aspartate 7, glutamate 67, and aspartate 140 each contribute to the Mg(2+) site.

It belongs to the RuvC family. As to quaternary structure, homodimer which binds Holliday junction (HJ) DNA. The HJ becomes 2-fold symmetrical on binding to RuvC with unstacked arms; it has a different conformation from HJ DNA in complex with RuvA. In the full resolvosome a probable DNA-RuvA(4)-RuvB(12)-RuvC(2) complex forms which resolves the HJ. Mg(2+) serves as cofactor.

It is found in the cytoplasm. It carries out the reaction Endonucleolytic cleavage at a junction such as a reciprocal single-stranded crossover between two homologous DNA duplexes (Holliday junction).. Functionally, the RuvA-RuvB-RuvC complex processes Holliday junction (HJ) DNA during genetic recombination and DNA repair. Endonuclease that resolves HJ intermediates. Cleaves cruciform DNA by making single-stranded nicks across the HJ at symmetrical positions within the homologous arms, yielding a 5'-phosphate and a 3'-hydroxyl group; requires a central core of homology in the junction. The consensus cleavage sequence is 5'-(A/T)TT(C/G)-3'. Cleavage occurs on the 3'-side of the TT dinucleotide at the point of strand exchange. HJ branch migration catalyzed by RuvA-RuvB allows RuvC to scan DNA until it finds its consensus sequence, where it cleaves and resolves the cruciform DNA. The chain is Crossover junction endodeoxyribonuclease RuvC from Rickettsia typhi (strain ATCC VR-144 / Wilmington).